The primary structure comprises 1255 residues: DNA-directed RNA polymerase subunit beta' (1255 aa).

Zn(2+)-binding residues include C60, C62, C77, and C80. Residues D503, D505, and D507 each contribute to the Mg(2+) site. C875, C950, C957, and C960 together coordinate Zn(2+).

Belongs to the RNA polymerase beta' chain family. As to quaternary structure, the RNAP catalytic core consists of 2 alpha, 1 beta, 1 beta' and 1 omega subunit. When a sigma factor is associated with the core the holoenzyme is formed, which can initiate transcription. Mg(2+) serves as cofactor. The cofactor is Zn(2+).

The enzyme catalyses RNA(n) + a ribonucleoside 5'-triphosphate = RNA(n+1) + diphosphate. Functionally, DNA-dependent RNA polymerase catalyzes the transcription of DNA into RNA using the four ribonucleoside triphosphates as substrates. The polypeptide is DNA-directed RNA polymerase subunit beta' (Mycoplasma mycoides subsp. mycoides SC (strain CCUG 32753 / NCTC 10114 / PG1)).